A 933-amino-acid chain; its full sequence is Dolichyl-phosphooligosaccharide-protein glycotransferase (933 aa).

The Cytoplasmic portion of the chain corresponds to Met-1–Lys-22. The chain crosses the membrane as a helical span at residues Ser-23–Ala-43. Residues Gln-44–Asn-146 lie on the Extracellular side of the membrane. The DXD motif 1 motif lies at Ala-72–Asp-74. Asp-74 serves as a coordination point for Mn(2+). A helical transmembrane segment spans residues Ala-147–Val-167. At Arg-168–Asn-174 the chain is on the cytoplasmic side. The chain crosses the membrane as a helical span at residues Ile-175–Cys-195. Ala-196 is a topological domain (extracellular). The helical transmembrane segment at Gly-197–Leu-217 threads the bilayer. Asp-200 contributes to the Mn(2+) binding site. Positions Asp-200–Pro-202 match the DXD motif 2 motif. Residues Glu-218–Pro-236 are Cytoplasmic-facing. Residues Ile-237–Ile-257 traverse the membrane as a helical segment. The Extracellular segment spans residues Ala-258 to Val-263. The chain crosses the membrane as a helical span at residues Val-264–Ile-284. Over Ala-285–Glu-296 the chain is Cytoplasmic. A helical transmembrane segment spans residues Phe-297 to Ala-317. A topological domain (extracellular) is located at residue Trp-318. Residues Trp-319–Leu-339 form a helical membrane-spanning segment. Topologically, residues Lys-340–Ser-361 are cytoplasmic. The chain crosses the membrane as a helical span at residues Ile-362–Ile-382. Topologically, residues Ser-383–Ala-427 are extracellular. A TIXE motif motif is present at residues Thr-410–Glu-413. Glu-413 lines the Mn(2+) pocket. Residues Ile-428–Leu-448 form a helical membrane-spanning segment. The Cytoplasmic segment spans residues Arg-449–Lys-454. The chain crosses the membrane as a helical span at residues Leu-455–Thr-475. Residues Lys-476 to Arg-479 lie on the Extracellular side of the membrane. Arg-479 is an a glycophospholipid binding site. A helical transmembrane segment spans residues Phe-480–Glu-500. Over Arg-501–Thr-581 the chain is Cytoplasmic. Residues Leu-582–Ala-602 form a helical membrane-spanning segment. Topologically, residues Pro-603–Lys-933 are extracellular. An interacts with target acceptor peptide in protein substrate region spans residues Trp-629–Asp-631. A WWDYG motif motif is present at residues Trp-629–Gly-633. Residues Met-756 to Trp-763 carry the MI motif motif.

It belongs to the STT3 family. It depends on Mn(2+) as a cofactor. Mg(2+) serves as cofactor.

The protein localises to the cell membrane. The catalysed reaction is an archaeal dolichyl phosphooligosaccharide + [protein]-L-asparagine = an archaeal dolichyl phosphate + a glycoprotein with the oligosaccharide chain attached by N-beta-D-glycosyl linkage to a protein L-asparagine.. The protein operates within cell surface structure biogenesis; S-layer biogenesis. Its pathway is protein modification; protein glycosylation. In terms of biological role, oligosaccharyl transferase (OST) that catalyzes the initial transfer of a defined glycan (ManNAcGlc-2,3-diNAcAGlcNAc in Methanococci) from the lipid carrier dolichol-monophosphate to an asparagine residue within an Asn-X-Ser/Thr consensus motif in nascent polypeptide chains, the first step in protein N-glycosylation. Involved in the assembly of an N-linked disaccharide that decorates the S-layer glycoprotein and flagellins. The chain is Dolichyl-phosphooligosaccharide-protein glycotransferase (aglB) from Methanocaldococcus jannaschii (strain ATCC 43067 / DSM 2661 / JAL-1 / JCM 10045 / NBRC 100440) (Methanococcus jannaschii).